Here is a 367-residue protein sequence, read N- to C-terminus: MKSSTFGMLALAAAAKLVSAHATVHAVWINDVDQGEGNSESGYIRSPPSNSPITDVTSKDMTCNVNNKATAKTLEVKAGDKITFEWHHDSRSDSDDIIASSHKGPIMVYMAPTEKGTAGNGWVKIAEDGYTDGTWAVDTLIKNRGKHSVTVPDVAAGEYLFRPEIIALHEGNRQGGAQFYMECVQVKVTSSGSKTLPEGVSIPGAYTATDKGILFDIYNSFDSYPFPGPAVWDGASGSSSSPSASASASAPAATSAAPAPSSFTTIAKQPATSSTEAPSTENTSTTSTIVSTTAAASATAPATPSSTSAIASSAASTNSVPQPSSNAGGAVKEWYQCGGLNYKGSTQCEEGLTCKKWNPYYYQCISA.

Positions 1–20 (MKSSTFGMLALAAAAKLVSA) are cleaved as a signal peptide. His-21 serves as a coordination point for Cu(2+). Residues 37-56 (GNSESGYIRSPPSNSPITDV) form a disordered region. Cysteines 63 and 183 form a disulfide. His-102 serves as a coordination point for Cu(2+). His-169 provides a ligand contact to O2. A Cu(2+)-binding site is contributed by Tyr-180. The tract at residues 234–287 (GASGSSSSPSASASASAPAATSAAPAPSSFTTIAKQPATSSTEAPSTENTSTTS) is disordered. 2 stretches are compositionally biased toward low complexity: residues 235–262 (ASGSSSSPSASASASAPAATSAAPAPSS) and 270–287 (PATSSTEAPSTENTSTTS). N-linked (GlcNAc...) asparagine glycosylation occurs at Asn-282. In terms of domain architecture, CBM1 spans 329–365 (GAVKEWYQCGGLNYKGSTQCEEGLTCKKWNPYYYQCI).

The protein belongs to the polysaccharide monooxygenase AA9 family. Requires Cu(2+) as cofactor.

It localises to the secreted. The catalysed reaction is [(1-&gt;4)-beta-D-glucosyl]n+m + reduced acceptor + O2 = 4-dehydro-beta-D-glucosyl-[(1-&gt;4)-beta-D-glucosyl]n-1 + [(1-&gt;4)-beta-D-glucosyl]m + acceptor + H2O.. Its function is as follows. Lytic polysaccharide monooxygenase (LPMO) that depolymerizes crystalline and amorphous polysaccharides via the oxidation of scissile alpha- or beta-(1-4)-glycosidic bonds, yielding C4 oxidation products. Catalysis by LPMOs requires the reduction of the active-site copper from Cu(II) to Cu(I) by a reducing agent and H(2)O(2) or O(2) as a cosubstrate. Active on cellulose and cello-oligosaccharides, as well as plant cell wall-derived hemicellulosic polysaccharides. Also active on cello-oligosaccharides such as cellohexaose, cellopentaose or cellotetraose. In Aspergillus oryzae (strain ATCC 42149 / RIB 40) (Yellow koji mold), this protein is AA9 family lytic polysaccharide monooxygenase A.